A 103-amino-acid chain; its full sequence is Stefin-3 (103 aa).

A Secondary area of contact motif is present at residues 52-56 (QVVAG).

It belongs to the cystatin family.

Its subcellular location is the cytoplasm. Its function is as follows. This is an intracellular thiol proteinase inhibitor. The chain is Stefin-3 (Stfa3) from Mus musculus (Mouse).